We begin with the raw amino-acid sequence, 1388 residues long: Rho-associated protein kinase 2 (1388 aa).

Residues 1 to 24 (MSRPPPTGKMPGAPEAVSGDGAGA) are disordered. Residues 92 to 354 (YDVVKVIGRG…VEEIKQHPFF (263 aa)) enclose the Protein kinase domain. ATP contacts are provided by residues 98–106 (IGRGAFGEV) and K121. D214 serves as the catalytic Proton acceptor. The AGC-kinase C-terminal domain maps to 357-425 (DQWNWDNIRE…YRENLLLSDS (69 aa)). Residues 363 to 784 (NIRETAAPVV…INELLKQKDV (422 aa)) are interaction with PPP1R12A. An interaction with NPM1 region spans residues 373 to 420 (PELSSDIDSSNFDDIEDDKGDVETFPIPKAFVGNQLPFIGFTYYRENL). Phosphothreonine; by ROCK2 is present on T414. 2 coiled-coil regions span residues 439–1025 (NEES…KQLL) and 1053–1131 (DTDV…IGLD). One can recognise an REM-1 domain in the interval 497–573 (TLRQLEREKA…LDETNALLRT (77 aa)). A compositionally biased stretch (basic and acidic residues) spans 512-530 (NAEYQRKADHEADKKRNLE). Positions 512–532 (NAEYQRKADHEADKKRNLEND) are disordered. The residue at position 722 (Y722) is a Phosphotyrosine; by SRC. The RhoBD domain maps to 979-1047 (TSDVANLANE…LAEIMNRKEP (69 aa)). Residues 979-1047 (TSDVANLANE…LAEIMNRKEP (69 aa)) are RHOA binding. S1137 bears the Phosphoserine mark. In terms of domain architecture, PH spans 1150-1349 (ESRLEGWLSL…WVSRLVKKIP (200 aa)). At T1212 the chain carries Phosphothreonine. Residues 1260 to 1315 (GHEFIPTLYHFPTNCEACMKPLWHMFKPPPALECRRCHIKCHKDHMDKKEEIIAPC) form a Phorbol-ester/DAG-type zinc finger. Residues 1345–1388 (VKKIPKKPPAPDPFARSSPRTSMKIQQNQSIRRPSRQLAPNKPS) form a disordered region. A phosphoserine mark is found at S1362 and S1374. Residues 1362 to 1376 (SPRTSMKIQQNQSIR) show a composition bias toward polar residues.

Belongs to the protein kinase superfamily. AGC Ser/Thr protein kinase family. As to quaternary structure, homodimer. Interacts with IRS1. Interacts with RAF1. Interacts with RHOA (activated by GTP). Interacts with RHOB and RHOC. Interacts with PPP1R12A. Interacts with EP300. Interacts with CHORDC1. Interacts with BRCA2. Interacts with NPM1; this interaction enhances ROCK2 activity. Interacts with SORL1. Interacts with PJVK. The cofactor is Mg(2+). Autophosphorylated. Phosphorylation at Tyr-722 reduces its binding to RHOA and is crucial for focal adhesion dynamics. Dephosphorylation by PTPN11 stimulates its RHOA binding activity. Post-translationally, cleaved by granzyme B during apoptosis. This leads to constitutive activation of the kinase and membrane blebbing. In terms of tissue distribution, highly expressed in whole brain and in cerebellum, and at lower levels in heart and lung. Detected at low levels in skeletal muscle, spleen, liver, kidney and pancreas.

The protein localises to the cytoplasm. Its subcellular location is the cell membrane. The protein resides in the nucleus. It localises to the cytoskeleton. It is found in the microtubule organizing center. The protein localises to the centrosome. The catalysed reaction is L-seryl-[protein] + ATP = O-phospho-L-seryl-[protein] + ADP + H(+). It catalyses the reaction L-threonyl-[protein] + ATP = O-phospho-L-threonyl-[protein] + ADP + H(+). With respect to regulation, activated by RHOA binding. Inhibited by Y-27632. In terms of biological role, protein kinase which is a key regulator of actin cytoskeleton and cell polarity. Involved in regulation of smooth muscle contraction, actin cytoskeleton organization, stress fiber and focal adhesion formation, neurite retraction, cell adhesion and motility via phosphorylation of ADD1, BRCA2, CNN1, EZR, DPYSL2, EP300, MSN, MYL9/MLC2, NPM1, RDX, PPP1R12A and VIM. Phosphorylates SORL1 and IRF4. Acts as a negative regulator of VEGF-induced angiogenic endothelial cell activation. Positively regulates the activation of p42/MAPK1-p44/MAPK3 and of p90RSK/RPS6KA1 during myogenic differentiation. Plays an important role in the timely initiation of centrosome duplication. Inhibits keratinocyte terminal differentiation. May regulate closure of the eyelids and ventral body wall through organization of actomyosin bundles. Plays a critical role in the regulation of spine and synaptic properties in the hippocampus. Plays an important role in generating the circadian rhythm of the aortic myofilament Ca(2+) sensitivity and vascular contractility by modulating the myosin light chain phosphorylation. The polypeptide is Rho-associated protein kinase 2 (ROCK2) (Bos taurus (Bovine)).